A 226-amino-acid chain; its full sequence is Ribonuclease 3 (226 aa).

The region spanning 7-129 (LPRLCRTLGY…IIGAVYLDAD (123 aa)) is the RNase III domain. Glutamate 42 provides a ligand contact to Mg(2+). The active site involves aspartate 46. Residues aspartate 115 and glutamate 118 each contribute to the Mg(2+) site. Residue glutamate 118 is part of the active site. In terms of domain architecture, DRBM spans 156–226 (DPKTILQEYL…AAQVLELLNK (71 aa)).

The protein belongs to the ribonuclease III family. Homodimer. The cofactor is Mg(2+).

The protein localises to the cytoplasm. The catalysed reaction is Endonucleolytic cleavage to 5'-phosphomonoester.. Its function is as follows. Digests double-stranded RNA. Involved in the processing of primary rRNA transcript to yield the immediate precursors to the large and small rRNAs (23S and 16S). Processes some mRNAs, and tRNAs when they are encoded in the rRNA operon. Processes pre-crRNA and tracrRNA of type II CRISPR loci if present in the organism. This chain is Ribonuclease 3, found in Shewanella frigidimarina (strain NCIMB 400).